The following is a 129-amino-acid chain: MAKLTTEELLAAFEELTLIELSEFIKAFEEKFDVTAAAPVAVAAAGGAAGGAEAAAAEEKDEFDVILEAAGDKKIGVIKEVRALTSLGLKEAKDLVDGAPKPILEGVNKETAEKAKEQLEGAGATVTLK.

Belongs to the bacterial ribosomal protein bL12 family. Homodimer. Part of the ribosomal stalk of the 50S ribosomal subunit. Forms a multimeric L10(L12)X complex, where L10 forms an elongated spine to which 2 to 4 L12 dimers bind in a sequential fashion. Binds GTP-bound translation factors.

Forms part of the ribosomal stalk which helps the ribosome interact with GTP-bound translation factors. Is thus essential for accurate translation. This chain is Large ribosomal subunit protein bL12, found in Micrococcus luteus (strain ATCC 4698 / DSM 20030 / JCM 1464 / CCM 169 / CCUG 5858 / IAM 1056 / NBRC 3333 / NCIMB 9278 / NCTC 2665 / VKM Ac-2230) (Micrococcus lysodeikticus).